We begin with the raw amino-acid sequence, 271 residues long: Type III pantothenate kinase (271 aa).

5–12 (DISNSVTK) serves as a coordination point for ATP. Substrate-binding positions include Y85 and 92–95 (GADR). The active-site Proton acceptor is D94. D114 lines the K(+) pocket. An ATP-binding site is contributed by T117. Residue T169 coordinates substrate.

It belongs to the type III pantothenate kinase family. As to quaternary structure, homodimer. The cofactor is NH4(+). Requires K(+) as cofactor.

It localises to the cytoplasm. It catalyses the reaction (R)-pantothenate + ATP = (R)-4'-phosphopantothenate + ADP + H(+). The protein operates within cofactor biosynthesis; coenzyme A biosynthesis; CoA from (R)-pantothenate: step 1/5. In terms of biological role, catalyzes the phosphorylation of pantothenate (Pan), the first step in CoA biosynthesis. The protein is Type III pantothenate kinase of Methylacidiphilum infernorum (isolate V4) (Methylokorus infernorum (strain V4)).